A 246-amino-acid polypeptide reads, in one-letter code: MAVAAVRAAAADAAVTFLWVLCVSTLGASTAAVTSYLRIHEGIHYALLVTVSLLSVLLFAFNLLCDALGGASFNPTALAAFHAAGLSSPRHSSLFPLALRFPAQAAGAVGGAMAISELMPEQYKHMLGGPSLKVDLHTGAAAELVLTFVITLAVLWIIVKGPRNPIVKTWMLSISTVCLVLTGAAYTGPSMNPANAFGWAYVNNRHNTWEQFYVYWICPFVGAVLAAWVFRAVFPPPAPKPKAKKA.

Transmembrane regions (helical) follow at residues 13–33 (AAVTFLWVLCVSTLGASTAAV) and 45–65 (YALLVTVSLLSVLLFAFNLLC). The NPA 1 signature appears at 74-76 (NPT). A run of 3 helical transmembrane segments spans residues 95–115 (FPLALRFPAQAAGAVGGAMAI), 139–159 (GAAAELVLTFVITLAVLWIIV), and 166–186 (IVKTWMLSISTVCLVLTGAAY). Positions 192 to 194 (NPA) match the NPA 2 motif. A helical membrane pass occupies residues 214-234 (VYWICPFVGAVLAAWVFRAVF).

Belongs to the MIP/aquaporin (TC 1.A.8) family. SIP (TC 1.A.8.10) subfamily. In terms of tissue distribution, expressed in roots, leaves and anthers.

Its subcellular location is the membrane. Its function is as follows. Aquaporins facilitate the transport of water and small neutral solutes across cell membranes. This Oryza sativa subsp. japonica (Rice) protein is Aquaporin SIP1-1 (SIP1-1).